Reading from the N-terminus, the 108-residue chain is Thioredoxin Asp f 28 (108 aa).

The region spanning 1–108 (MSHGKVIAVD…LEEMIKSISA (108 aa)) is the Thioredoxin domain. Residues Cys-33 and Cys-36 each act as nucleophile in the active site. Cysteines 33 and 36 form a disulfide.

It belongs to the thioredoxin family.

In terms of biological role, participates in various redox reactions through the reversible oxidation of its active center dithiol to a disulfide and catalyzes dithiol-disulfide exchange reactions. This chain is Thioredoxin Asp f 28, found in Aspergillus fumigatus (Neosartorya fumigata).